We begin with the raw amino-acid sequence, 490 residues long: MAIELGLFAKTALASRFTDWAKQYGPVFPLRIGSHGLMVVLTSAYHATHLLDKRSANSSNRPPSFVLGDLVFAGDHPMFMDANERWKLRRKLYFQLMNEARCNTEHIRLVEAEATHLLRDLCLEPDSFMQHPARYSNSIIMSLVFGIRTPHYSSPHCIELQRIVTELSNLGEIGASPPVDWLPFLKYLPERLWGDWKTRAARLRQRVLNLHSPLVDRVLERRKNIGTAATFLDGVLDRQEKLQLTREEIDIMCGNLLEGGTDTMATTILTFFQAMVTYPEVQARAQKQIDSVLTDGECPSWSDYDRLPYVAMIVKEVLRWRPPAPGSFPHTLAQDDEFEGMKFLKGTSVVLNVWGIHNDESRYPSPETFEPSRFAEQTRLASVYANAGDAQKRDHFGYGAGRRICPGIHLAERALFIAMAKLLWGFTVQQKLDSSGNPIPVDVNPATAYRDGFLNQCLPFDIDIKPRLGRQEMIMVAAAKAENDVLSAYE.

Heme is bound at residue Cys-405.

The protein belongs to the cytochrome P450 family. The cofactor is heme.

The catalysed reaction is 2-hydroxymethyl-3-pentylphenol + reduced [NADPH--hemoprotein reductase] + O2 = (8S)-annullatin E + oxidized [NADPH--hemoprotein reductase] + H2O + H(+). Its pathway is secondary metabolite biosynthesis. Cytochrome P450 monooxygenase; part of the gene cluster that mediates the biosynthesis of annullatin D, an alkylated aromatic polyketide with a fused dihydrobenzofuran lactone ring system that exhibits potent agonistic activities toward the cannabinoid receptors. Within the pathway, anuE catalyzes the hydroxylation of 2-hydroxymethyl-3-pentylphenol at the side chain to produce (8S)-annullatin E. The annullatin backbone 2-hydroxymethyl-3-pentylphenol is assembled from one acetyl-CoA starter unit and 5 malonyl-CoA elongation units by cooperation of the highly reducing polyketide synthase anuA, the short-chain dehydrogenase anuB and the oxidoreductase anuC, before being hydroxylated at the C-5 alkyl chain by the cytochrome P450 monooxygenase anuE to form (8S)-annullatin E. The prenyltransferase anuH subsequently installs one isoprenyl group at the benzene ring to form (8S)-annullatin J. Enzymatic or nonenzymatic dihydro-benzofuran ring formation between the prenyl and the phenolic hydroxyl groups in (8S)-annullatin J results in two diastereomers (2S,9S)-annullatin H and compound 12. The intermediate (2S,9S)-annullatin H is then converted to (2S,9S)-annullatin D by the FAD-linked oxidoreductase anuG-catalyzed five-member lactone ring formation. The isomer 12 acts as a substrate for the short-chain dehydrogenase anuF and is oxidized to (2R)-annullatin F, which is subsequently acetylated by an acetyltransferase leading to (2R)-annullatin G formation. The remaining enzymes identified within the cluster, anuD, anuI and anuJ, seem not to be involved in annullatin biosynthesis. This is Cytochrome P450 monooxygenase anuE from Penicillium roqueforti (strain FM164).